A 755-amino-acid chain; its full sequence is Polyribonucleotide nucleotidyltransferase (755 aa).

The Mg(2+) site is built by D527 and D533. In terms of domain architecture, KH spans 593–652; that stretch reads PRITTIKVPVDKIGEVIGPKGKMINSITEETGANISIEDDGTVFVGAADGASAQAAIDKI. The 70-residue stretch at 664-733 folds into the S1 motif domain; the sequence is GERFLGTVVK…NRGKISLVPV (70 aa). The tract at residues 734–755 is disordered; that stretch reads GEEDAAEAPAPAEAQPADAVTQ. Residues 740 to 755 show a composition bias toward low complexity; it reads EAPAPAEAQPADAVTQ.

The protein belongs to the polyribonucleotide nucleotidyltransferase family. It depends on Mg(2+) as a cofactor.

It localises to the cytoplasm. The enzyme catalyses RNA(n+1) + phosphate = RNA(n) + a ribonucleoside 5'-diphosphate. In terms of biological role, involved in mRNA degradation. Catalyzes the phosphorolysis of single-stranded polyribonucleotides processively in the 3'- to 5'-direction. This Mycobacteroides abscessus (strain ATCC 19977 / DSM 44196 / CCUG 20993 / CIP 104536 / JCM 13569 / NCTC 13031 / TMC 1543 / L948) (Mycobacterium abscessus) protein is Polyribonucleotide nucleotidyltransferase.